The chain runs to 325 residues: DNA-directed RNA polymerase subunit alpha (325 aa).

Residues 1–231 are alpha N-terminal domain (alpha-NTD); sequence MQTSLLKPKI…DQLSVFAALE (231 aa). An alpha C-terminal domain (alpha-CTD) region spans residues 246-325; the sequence is IDPILLRPVD…ENWPPAGLDK (80 aa).

It belongs to the RNA polymerase alpha chain family. In terms of assembly, homodimer. The RNAP catalytic core consists of 2 alpha, 1 beta, 1 beta' and 1 omega subunit. When a sigma factor is associated with the core the holoenzyme is formed, which can initiate transcription.

It carries out the reaction RNA(n) + a ribonucleoside 5'-triphosphate = RNA(n+1) + diphosphate. In terms of biological role, DNA-dependent RNA polymerase catalyzes the transcription of DNA into RNA using the four ribonucleoside triphosphates as substrates. The sequence is that of DNA-directed RNA polymerase subunit alpha from Paraburkholderia phymatum (strain DSM 17167 / CIP 108236 / LMG 21445 / STM815) (Burkholderia phymatum).